The sequence spans 598 residues: Leucine aminopeptidase 2, chloroplastic (598 aa).

The N-terminal 71 residues, 1 to 71 (MATAASTSAA…GHRARMGHTA (71 aa)), are a transit peptide targeting the chloroplast. Positions 367 and 372 each coordinate Mn(2+). Lysine 379 is a catalytic residue. Residues aspartate 392, aspartate 452, and glutamate 454 each coordinate Mn(2+). The active site involves arginine 456.

It belongs to the peptidase M17 family. Homohexamer (dimer of homotrimers). The cofactor is Mn(2+).

The protein localises to the plastid. It is found in the chloroplast. It carries out the reaction Release of an N-terminal amino acid, Xaa-|-Yaa-, in which Xaa is preferably Leu, but may be other amino acids including Pro although not Arg or Lys, and Yaa may be Pro. Amino acid amides and methyl esters are also readily hydrolyzed, but rates on arylamides are exceedingly low.. It catalyses the reaction Release of N-terminal proline from a peptide.. Its function is as follows. Presumably involved in the processing and regular turnover of intracellular proteins. Catalyzes the removal of unsubstituted N-terminal amino acids from various peptides. This Oryza sativa subsp. japonica (Rice) protein is Leucine aminopeptidase 2, chloroplastic.